We begin with the raw amino-acid sequence, 367 residues long: uncharacterized protein (367 aa).

The protein belongs to the Gfo/Idh/MocA family.

This is an uncharacterized protein from Streptococcus pneumoniae serotype 4 (strain ATCC BAA-334 / TIGR4).